We begin with the raw amino-acid sequence, 503 residues long: ATP synthase subunit beta (503 aa).

ATP is bound at residue 157–164 (GGAGVGKT).

It belongs to the ATPase alpha/beta chains family. As to quaternary structure, F-type ATPases have 2 components, CF(1) - the catalytic core - and CF(0) - the membrane proton channel. CF(1) has five subunits: alpha(3), beta(3), gamma(1), delta(1), epsilon(1). CF(0) has three main subunits: a(1), b(2) and c(9-12). The alpha and beta chains form an alternating ring which encloses part of the gamma chain. CF(1) is attached to CF(0) by a central stalk formed by the gamma and epsilon chains, while a peripheral stalk is formed by the delta and b chains.

Its subcellular location is the cell membrane. It carries out the reaction ATP + H2O + 4 H(+)(in) = ADP + phosphate + 5 H(+)(out). Its function is as follows. Produces ATP from ADP in the presence of a proton gradient across the membrane. The catalytic sites are hosted primarily by the beta subunits. The chain is ATP synthase subunit beta from Christiangramia forsetii (strain DSM 17595 / CGMCC 1.15422 / KT0803) (Gramella forsetii).